Reading from the N-terminus, the 314-residue chain is Deoxyribonuclease-1-like 1 (314 aa).

Residues 1–37 (MPFGQPGFLWRVPDAHIAMRGLVMAPLLILLVGGTEA) form the signal peptide. An N-linked (GlcNAc...) asparagine glycan is attached at N102. E113 is an active-site residue. A glycan (N-linked (GlcNAc...) asparagine) is linked at N133. The active site involves H164. C203 and C240 are disulfide-bonded. N-linked (GlcNAc...) asparagine glycosylation is present at N239.

This sequence belongs to the DNase I family. As to expression, highly expressed in heart and skeletal muscles. Low expression in brain and thymus. Intermediated expression in other tissues.

Its subcellular location is the endoplasmic reticulum. The sequence is that of Deoxyribonuclease-1-like 1 (Dnase1l1) from Mus musculus (Mouse).